We begin with the raw amino-acid sequence, 299 residues long: HTH-type transcriptional regulator CrgA (299 aa).

The 60-residue stretch at 1–60 (MKTNSEELTVFVQVVESGSFSRAAEQLAMANSAVSRIVKRLEEKLGVNLLNRTTRQLSLT) folds into the HTH lysR-type domain. Positions 20 to 39 (FSRAAEQLAMANSAVSRIVK) form a DNA-binding region, H-T-H motif.

Belongs to the LysR transcriptional regulatory family. In terms of assembly, forms oligomers. Forms an octomeric ring-like structure in solution. May form hexadecamers when bound to target DNA.

Its activity is regulated as follows. Activation and repression activities are enhanced by the addition of alpha-methylene-gamma-butyrolactone (MBL), an inducer of NADPH:quinone oxidoreductase. Regulatory protein that activates transcription of mdaB, encoding a NADPH:quinone oxidoreductase, and represses its own transcription. Under the same experimental conditions, no regulation of transcription of pilus and capsule genes is detected. In Neisseria meningitidis serogroup B (strain ATCC BAA-335 / MC58), this protein is HTH-type transcriptional regulator CrgA.